The sequence spans 115 residues: Nucleoid-associated protein Npun_F0448 (115 aa).

Belongs to the YbaB/EbfC family. As to quaternary structure, homodimer.

It localises to the cytoplasm. The protein resides in the nucleoid. Binds to DNA and alters its conformation. May be involved in regulation of gene expression, nucleoid organization and DNA protection. The sequence is that of Nucleoid-associated protein Npun_F0448 from Nostoc punctiforme (strain ATCC 29133 / PCC 73102).